We begin with the raw amino-acid sequence, 906 residues long: Protein translocase subunit SecA (906 aa).

Residues Q87, 105-109 (GEGKT), and D513 each bind ATP. The interval 860–906 (QVNKGEVVSDENTGDDTFVRNEKKVGRNEPCPCGSGKKYKQCHGKLD) is disordered. Residues 876-886 (TFVRNEKKVGR) show a composition bias toward basic and acidic residues. C890, C892, C901, and H902 together coordinate Zn(2+). Over residues 896-906 (KKYKQCHGKLD) the composition is skewed to basic residues.

The protein belongs to the SecA family. As to quaternary structure, monomer and homodimer. Part of the essential Sec protein translocation apparatus which comprises SecA, SecYEG and auxiliary proteins SecDF-YajC and YidC. The cofactor is Zn(2+).

The protein resides in the cell inner membrane. Its subcellular location is the cytoplasm. It carries out the reaction ATP + H2O + cellular proteinSide 1 = ADP + phosphate + cellular proteinSide 2.. In terms of biological role, part of the Sec protein translocase complex. Interacts with the SecYEG preprotein conducting channel. Has a central role in coupling the hydrolysis of ATP to the transfer of proteins into and across the cell membrane, serving both as a receptor for the preprotein-SecB complex and as an ATP-driven molecular motor driving the stepwise translocation of polypeptide chains across the membrane. This is Protein translocase subunit SecA from Psychromonas ingrahamii (strain DSM 17664 / CCUG 51855 / 37).